We begin with the raw amino-acid sequence, 317 residues long: Pyridoxal 5'-phosphate synthase subunit PdxS (317 aa).

D-ribose 5-phosphate is bound at residue Asp-47. The active-site Schiff-base intermediate with D-ribose 5-phosphate is Lys-104. Gly-176 lines the D-ribose 5-phosphate pocket. Arg-188 provides a ligand contact to D-glyceraldehyde 3-phosphate. D-ribose 5-phosphate is bound by residues Gly-237 and 258–259 (GS).

This sequence belongs to the PdxS/SNZ family. As to quaternary structure, in the presence of PdxT, forms a dodecamer of heterodimers.

The catalysed reaction is aldehydo-D-ribose 5-phosphate + D-glyceraldehyde 3-phosphate + L-glutamine = pyridoxal 5'-phosphate + L-glutamate + phosphate + 3 H2O + H(+). The protein operates within cofactor biosynthesis; pyridoxal 5'-phosphate biosynthesis. Catalyzes the formation of pyridoxal 5'-phosphate from ribose 5-phosphate (RBP), glyceraldehyde 3-phosphate (G3P) and ammonia. The ammonia is provided by the PdxT subunit. Can also use ribulose 5-phosphate and dihydroxyacetone phosphate as substrates, resulting from enzyme-catalyzed isomerization of RBP and G3P, respectively. The protein is Pyridoxal 5'-phosphate synthase subunit PdxS of Corynebacterium glutamicum (strain ATCC 13032 / DSM 20300 / JCM 1318 / BCRC 11384 / CCUG 27702 / LMG 3730 / NBRC 12168 / NCIMB 10025 / NRRL B-2784 / 534).